A 281-amino-acid chain; its full sequence is NADH-quinone oxidoreductase subunit B (281 aa).

[4Fe-4S] cluster is bound by residues Cys37, Cys38, Cys103, and Cys132. The disordered stretch occupies residues Asp242–Pro281. Positions Thr257–Pro281 are enriched in low complexity.

This sequence belongs to the complex I 20 kDa subunit family. NDH-1 is composed of 14 different subunits. Subunits NuoB, C, D, E, F, and G constitute the peripheral sector of the complex. Requires [4Fe-4S] cluster as cofactor.

It localises to the cell membrane. The enzyme catalyses a quinone + NADH + 5 H(+)(in) = a quinol + NAD(+) + 4 H(+)(out). NDH-1 shuttles electrons from NADH, via FMN and iron-sulfur (Fe-S) centers, to quinones in the respiratory chain. The immediate electron acceptor for the enzyme in this species is believed to be a menaquinone. Couples the redox reaction to proton translocation (for every two electrons transferred, four hydrogen ions are translocated across the cytoplasmic membrane), and thus conserves the redox energy in a proton gradient. This chain is NADH-quinone oxidoreductase subunit B, found in Frankia alni (strain DSM 45986 / CECT 9034 / ACN14a).